We begin with the raw amino-acid sequence, 31 residues long: Aspartate aminotransferase, cytoplasmic (31 aa).

This sequence belongs to the class-I pyridoxal-phosphate-dependent aminotransferase family. As to quaternary structure, homodimer. Pyridoxal 5'-phosphate is required as a cofactor.

It is found in the cytoplasm. The enzyme catalyses L-aspartate + 2-oxoglutarate = oxaloacetate + L-glutamate. It catalyses the reaction L-cysteine + 2-oxoglutarate = 2-oxo-3-sulfanylpropanoate + L-glutamate. The catalysed reaction is (2S)-2-aminobutanoate + 2-oxoglutarate = 2-oxobutanoate + L-glutamate. It carries out the reaction 3-sulfino-L-alanine + 2-oxoglutarate = 3-sulfinopyruvate + L-glutamate. Its function is as follows. Biosynthesis of L-glutamate from L-aspartate or L-cysteine. Important regulator of levels of glutamate, the major excitatory neurotransmitter of the vertebrate central nervous system. Acts as a scavenger of glutamate in brain neuroprotection. The aspartate aminotransferase activity is involved in hepatic glucose synthesis during development and in adipocyte glyceroneogenesis. Using L-cysteine as substrate, regulates levels of mercaptopyruvate, an important source of hydrogen sulfide. Mercaptopyruvate is converted into H(2)S via the action of 3-mercaptopyruvate sulfurtransferase (3MST). Hydrogen sulfide is an important synaptic modulator and neuroprotectant in the brain. The sequence is that of Aspartate aminotransferase, cytoplasmic from Oryctolagus cuniculus (Rabbit).